We begin with the raw amino-acid sequence, 198 residues long: NADH-quinone oxidoreductase subunit C (198 aa).

Belongs to the complex I 30 kDa subunit family. In terms of assembly, NDH-1 is composed of 14 different subunits. Subunits NuoB, C, D, E, F, and G constitute the peripheral sector of the complex.

The protein localises to the cell inner membrane. It carries out the reaction a quinone + NADH + 5 H(+)(in) = a quinol + NAD(+) + 4 H(+)(out). NDH-1 shuttles electrons from NADH, via FMN and iron-sulfur (Fe-S) centers, to quinones in the respiratory chain. The immediate electron acceptor for the enzyme in this species is believed to be ubiquinone. Couples the redox reaction to proton translocation (for every two electrons transferred, four hydrogen ions are translocated across the cytoplasmic membrane), and thus conserves the redox energy in a proton gradient. The polypeptide is NADH-quinone oxidoreductase subunit C (Janthinobacterium sp. (strain Marseille) (Minibacterium massiliensis)).